The chain runs to 227 residues: Phosphoribosylformylglycinamidine synthase subunit PurQ (227 aa).

Positions 2–227 (RWAIVRFPGA…FLGLVKEVAR (226 aa)) constitute a Glutamine amidotransferase type-1 domain. Residue Cys-85 is the Nucleophile of the active site. Catalysis depends on residues His-200 and Glu-202.

In terms of assembly, part of the FGAM synthase complex composed of 1 PurL, 1 PurQ and 2 PurS subunits.

It localises to the cytoplasm. It catalyses the reaction N(2)-formyl-N(1)-(5-phospho-beta-D-ribosyl)glycinamide + L-glutamine + ATP + H2O = 2-formamido-N(1)-(5-O-phospho-beta-D-ribosyl)acetamidine + L-glutamate + ADP + phosphate + H(+). The catalysed reaction is L-glutamine + H2O = L-glutamate + NH4(+). It functions in the pathway purine metabolism; IMP biosynthesis via de novo pathway; 5-amino-1-(5-phospho-D-ribosyl)imidazole from N(2)-formyl-N(1)-(5-phospho-D-ribosyl)glycinamide: step 1/2. Part of the phosphoribosylformylglycinamidine synthase complex involved in the purines biosynthetic pathway. Catalyzes the ATP-dependent conversion of formylglycinamide ribonucleotide (FGAR) and glutamine to yield formylglycinamidine ribonucleotide (FGAM) and glutamate. The FGAM synthase complex is composed of three subunits. PurQ produces an ammonia molecule by converting glutamine to glutamate. PurL transfers the ammonia molecule to FGAR to form FGAM in an ATP-dependent manner. PurS interacts with PurQ and PurL and is thought to assist in the transfer of the ammonia molecule from PurQ to PurL. This Thermus thermophilus (strain ATCC 27634 / DSM 579 / HB8) protein is Phosphoribosylformylglycinamidine synthase subunit PurQ.